Reading from the N-terminus, the 195-residue chain is PABIR family member 1 (195 aa).

The protein belongs to the FAM122 family.

This is PABIR family member 1 from Homo sapiens (Human).